The primary structure comprises 419 residues: MSRWKIYTPDGVQDILFDECYKKREIEKRIRNTFRSYGYYEIETPTIEFFDVFSSEIEHFPQESMVKFFDQKGRILVLRPDITVPVARITATKNRDVQVPIKYSYIGNVFRFNEVGGGRQNEFTQAGVEMLGDSSSESDAEIIAMAINTLKSVGLKEFKIEIGQVEFFKGLAEEAGFSNEDIDAISKQIDKKDLVGVEEILNRYDISTELREIVLKLTGLFGSVDVIKEFKKASINGRSLKAIENVEEVVSILCDYGLSEYVSIDLGMLKSLNYDTGITFRGFTNGVGFPILSGARYDNLTSSFGKECPATGFSLRINMLMTAMEKAGHTFERPSVDSLVCYEKTNRKRAIEIAEALRKQDMKIETFVLTKGIDQAKKYAASKKIGGIIYIRDNDKITVYDIKNNITEETSFDTLLNNQ.

This sequence belongs to the class-II aminoacyl-tRNA synthetase family. HisZ subfamily. In terms of assembly, heteromultimer composed of HisG and HisZ subunits.

The protein localises to the cytoplasm. Its pathway is amino-acid biosynthesis; L-histidine biosynthesis; L-histidine from 5-phospho-alpha-D-ribose 1-diphosphate: step 1/9. Required for the first step of histidine biosynthesis. May allow the feedback regulation of ATP phosphoribosyltransferase activity by histidine. The sequence is that of ATP phosphoribosyltransferase regulatory subunit from Ruminiclostridium cellulolyticum (strain ATCC 35319 / DSM 5812 / JCM 6584 / H10) (Clostridium cellulolyticum).